The sequence spans 286 residues: Aminoglycoside N(3)-acetyltransferase III (286 aa).

The protein belongs to the antibiotic N-acetyltransferase family.

It catalyses the reaction a 2-deoxystreptamine antibiotic + acetyl-CoA = an N(3)-acetyl-2-deoxystreptamine antibiotic + CoA + H(+). In terms of biological role, resistance to antibiotics containing the 2-deoxy-streptamine ring including gentamicin, kanamycin, tobramycin, neomycin and apramycin. This Salmonella sp protein is Aminoglycoside N(3)-acetyltransferase III (aacC3).